We begin with the raw amino-acid sequence, 225 residues long: Thylakoid lumenal 17.9 kDa protein, chloroplastic (225 aa).

Its subcellular location is the plastid. It localises to the chloroplast thylakoid lumen. This Arabidopsis thaliana (Mouse-ear cress) protein is Thylakoid lumenal 17.9 kDa protein, chloroplastic.